Here is a 124-residue protein sequence, read N- to C-terminus: Ribonuclease pancreatic (124 aa).

Substrate-binding residues include lysine 7 and arginine 10. The active-site Proton acceptor is histidine 12. 4 cysteine pairs are disulfide-bonded: cysteine 26/cysteine 84, cysteine 40/cysteine 95, cysteine 58/cysteine 110, and cysteine 65/cysteine 72. Asparagine 34 carries an N-linked (GlcNAc...) asparagine; partial glycan. Substrate contacts are provided by residues 41–45 (KPVBT), lysine 66, and arginine 85. The Proton donor role is filled by histidine 119.

It belongs to the pancreatic ribonuclease family. Monomer. Interacts with and forms tight 1:1 complexes with RNH1. Dimerization of two such complexes may occur. Interaction with RNH1 inhibits this protein. Pancreas.

The protein localises to the secreted. The catalysed reaction is an [RNA] containing cytidine + H2O = an [RNA]-3'-cytidine-3'-phosphate + a 5'-hydroxy-ribonucleotide-3'-[RNA].. It catalyses the reaction an [RNA] containing uridine + H2O = an [RNA]-3'-uridine-3'-phosphate + a 5'-hydroxy-ribonucleotide-3'-[RNA].. Endonuclease that catalyzes the cleavage of RNA on the 3' side of pyrimidine nucleotides. Acts on single-stranded and double-stranded RNA. The protein is Ribonuclease pancreatic (RNASE1) of Damaliscus korrigum (Topi).